The following is a 270-amino-acid chain: Sugar phosphatase YidA (270 aa).

Aspartate 9 serves as the catalytic Nucleophile. Residue aspartate 9 participates in Mg(2+) binding. Methionine 10 provides a ligand contact to phosphate. A Mg(2+)-binding site is contributed by aspartate 11. Residues 43-44 and lysine 197 contribute to the phosphate site; that span reads TG. A Mg(2+)-binding site is contributed by aspartate 220. Residue asparagine 223 participates in phosphate binding.

Belongs to the HAD-like hydrolase superfamily. Cof family. In terms of assembly, homodimer. Mg(2+) is required as a cofactor.

It catalyses the reaction sugar phosphate + H2O = sugar + phosphate.. Catalyzes the dephosphorylation of different sugar phosphates. The sequence is that of Sugar phosphatase YidA (yidA) from Escherichia coli O6:H1 (strain CFT073 / ATCC 700928 / UPEC).